A 1151-amino-acid chain; its full sequence is Syntaxin-binding protein 5 (1151 aa).

Residues 14-34 (TAGSSSASQQQQQQHPPGNRE) are disordered. The segment covering 17–27 (SSSASQQQQQQ) has biased composition (low complexity). WD repeat units follow at residues 61 to 94 (SALA…CYCQ), 101 to 140 (VIQL…SLKF), 145 to 181 (VTFC…GYVI), 200 to 234 (HISD…DYRY), 240 to 272 (IHSV…PAKP), 294 to 336 (PILK…KSTA), 344 to 378 (IVDF…LIDL), 400 to 477 (TCCE…YKLK), 505 to 619 (QIIS…ELVI), and 633 to 695 (TSLA…SGAG). 2 disordered regions span residues 555-595 (ETPE…GLRD) and 674-729 (SNDP…EQKM). Serine 692 is subject to Phosphoserine. Low complexity predominate over residues 712–721 (SPTSGSSSPH). Serine 723 bears the Phosphoserine; by PKA mark. Serine 759 is subject to Phosphoserine. The residue at position 762 (threonine 762) is a Phosphothreonine. Serine 782 bears the Phosphoserine mark. Threonine 784 carries the phosphothreonine modification. A Phosphoserine modification is found at serine 785. WD repeat units lie at residues 794-851 (ISAL…SGTI), 860-934 (RMAF…QNCA), 939-983 (ITET…LDVY), and 997-1020 (CFTN…TYSQ). Residues 881–892 (HNVPEEKDEKEK) show a composition bias toward basic and acidic residues. The interval 881-906 (HNVPEEKDEKEKLKKRRPVSVSPSSS) is disordered. Serine 900 and serine 902 each carry phosphoserine. Threonine 1039 carries the phosphothreonine modification. A phosphoserine mark is found at serine 1058 and serine 1131. Positions 1086 to 1146 (GIEGVKGAAS…HEIMLKYKDK (61 aa)) constitute a v-SNARE coiled-coil homology domain.

Belongs to the WD repeat L(2)GL family. Interacts with STX1A and STX1B via its v-SNARE homology domain. Part of a complex that contains STX1, STXBP5, SNAP25 and SYT1. Part of a complex that contains STXBP5, STX4A and SNAP23.

It localises to the cytoplasm. The protein localises to the cell membrane. The protein resides in the cytoplasmic vesicle membrane. Its subcellular location is the cytoplasmic vesicle. It is found in the secretory vesicle. It localises to the synaptic vesicle. The protein localises to the synapse. Functionally, plays a regulatory role in calcium-dependent exocytosis and neurotransmitter release. Inhibits membrane fusion between transport vesicles and the plasma membrane. May modulate the assembly of trans-SNARE complexes between transport vesicles and the plasma membrane. Inhibits translocation of GLUT4 from intracellular vesicles to the plasma membrane. Competes with STXBP1 for STX1 binding. The protein is Syntaxin-binding protein 5 (STXBP5) of Homo sapiens (Human).